The following is a 134-amino-acid chain: Early E3B 14.5 kDa protein (134 aa).

The signal sequence occupies residues 1 to 21; that stretch reads MQAMLPVILILLLPCIPLAST. Residues 54–78 form a helical membrane-spanning segment; that stretch reads YWIVIVGIINILSCTFFSITIYPTF.

This sequence belongs to the adenoviridae E3_14 family. Post-translationally, phosphorylated on serine; O-glycosylated, but not N-glycosylated.

The protein resides in the host membrane. Functionally, down-regulates the EGF receptor and prevents cytolysis by TNF. The polypeptide is Early E3B 14.5 kDa protein (Homo sapiens (Human)).